A 386-amino-acid polypeptide reads, in one-letter code: Succinate--CoA ligase [ADP-forming] subunit beta (386 aa).

Residues 9–244 (KEIFRKYGVP…LAEEEPREIQ (236 aa)) enclose the ATP-grasp domain. ATP-binding positions include Lys-46, 53–55 (GRG), Glu-99, Leu-102, and Glu-107. Asn-199 and Asp-213 together coordinate Mg(2+). Substrate contacts are provided by residues Asn-264 and 321 to 323 (GIM).

The protein belongs to the succinate/malate CoA ligase beta subunit family. In terms of assembly, heterotetramer of two alpha and two beta subunits. Requires Mg(2+) as cofactor.

The enzyme catalyses succinate + ATP + CoA = succinyl-CoA + ADP + phosphate. It carries out the reaction GTP + succinate + CoA = succinyl-CoA + GDP + phosphate. It functions in the pathway carbohydrate metabolism; tricarboxylic acid cycle; succinate from succinyl-CoA (ligase route): step 1/1. In terms of biological role, succinyl-CoA synthetase functions in the citric acid cycle (TCA), coupling the hydrolysis of succinyl-CoA to the synthesis of either ATP or GTP and thus represents the only step of substrate-level phosphorylation in the TCA. The beta subunit provides nucleotide specificity of the enzyme and binds the substrate succinate, while the binding sites for coenzyme A and phosphate are found in the alpha subunit. The chain is Succinate--CoA ligase [ADP-forming] subunit beta from Myxococcus xanthus (strain DK1622).